A 546-amino-acid chain; its full sequence is Glucose-6-phosphate isomerase (546 aa).

The active-site Proton donor is Glu353. Residues His384 and Lys512 contribute to the active site.

Belongs to the GPI family.

Its subcellular location is the cytoplasm. The enzyme catalyses alpha-D-glucose 6-phosphate = beta-D-fructose 6-phosphate. It participates in carbohydrate biosynthesis; gluconeogenesis. It functions in the pathway carbohydrate degradation; glycolysis; D-glyceraldehyde 3-phosphate and glycerone phosphate from D-glucose: step 2/4. In terms of biological role, catalyzes the reversible isomerization of glucose-6-phosphate to fructose-6-phosphate. The chain is Glucose-6-phosphate isomerase from Actinobacillus pleuropneumoniae serotype 5b (strain L20).